A 732-amino-acid chain; its full sequence is Polyribonucleotide nucleotidyltransferase (732 aa).

Mg(2+) contacts are provided by D503 and D509. The 60-residue stretch at 570–629 (PRLTAIQVPVESIGLIIGKGGETIRSITEETGAEINIEDDGTVTIACSSNEGTKGAVEII) folds into the KH domain. Positions 639-713 (GTVYIGKVRD…GKTRFALSIK (75 aa)) constitute an S1 motif domain.

Belongs to the polyribonucleotide nucleotidyltransferase family. Mg(2+) is required as a cofactor.

It is found in the cytoplasm. The enzyme catalyses RNA(n+1) + phosphate = RNA(n) + a ribonucleoside 5'-diphosphate. Its function is as follows. Involved in mRNA degradation. Catalyzes the phosphorolysis of single-stranded polyribonucleotides processively in the 3'- to 5'-direction. The sequence is that of Polyribonucleotide nucleotidyltransferase from Chlorobium phaeovibrioides (strain DSM 265 / 1930) (Prosthecochloris vibrioformis (strain DSM 265)).